Consider the following 735-residue polypeptide: Protostadienol synthase A (735 aa).

A PFTB 1 repeat occupies 129–170; it reads KNEMIRYLLNFVNEDGGWGLWINSPSTVFGTTMNYTMLRILG. Catalysis depends on D460, which acts as the Proton donor. PFTB repeat units follow at residues 487–528, 564–604, and 613–660; these read LAEA…YDNV, MARC…ETVG, and CRNA…ALMG.

This sequence belongs to the terpene cyclase/mutase family.

It carries out the reaction (S)-2,3-epoxysqualene = (17Z)-protosta-17(20),24-dien-3beta-ol. In terms of biological role, protostadienol synthase which cyclizes (3S)-oxidosqualene to (17Z)-protosta-17(20),24-dien-3-beta-ol (protostadienol), the biosynthetic precursor of helvolic acid, a secondary metabolite which promotes virulence. The polypeptide is Protostadienol synthase A (PDSA) (Arthroderma gypseum (strain ATCC MYA-4604 / CBS 118893) (Microsporum gypseum)).